The following is a 456-amino-acid chain: Adenylosuccinate synthetase isozyme 2 (456 aa).

Residues 1–24 (MAFAETNPAASSLPNGDCGRPRAR) are disordered. GTP is bound by residues 39–45 (GDEGKGK) and 67–69 (GHT). Residue aspartate 40 is the Proton acceptor of the active site. Aspartate 40 and glycine 67 together coordinate Mg(2+). Aspartate 40 contributes to the substrate binding site. IMP-binding positions include 40–43 (DEGK), 65–68 (NAGH), threonine 162, arginine 176, asparagine 255, threonine 270, and arginine 334. The active-site Proton donor is the histidine 68. 330 to 336 (VTTGRKR) is a substrate binding site. Residues arginine 336, 362–364 (KLD), and 444–447 (GVGK) contribute to the GTP site.

The protein belongs to the adenylosuccinate synthetase family. As to quaternary structure, homodimer. Requires Mg(2+) as cofactor. Widely expressed.

The protein resides in the cytoplasm. It localises to the mitochondrion. It carries out the reaction IMP + L-aspartate + GTP = N(6)-(1,2-dicarboxyethyl)-AMP + GDP + phosphate + 2 H(+). It functions in the pathway purine metabolism; AMP biosynthesis via de novo pathway; AMP from IMP: step 1/2. Its activity is regulated as follows. Inhibited competitively by AMP and IMP and non-competitively by fructose 1,6-bisphosphate. Its function is as follows. Plays an important role in the de novo pathway and in the salvage pathway of purine nucleotide biosynthesis. Catalyzes the first committed step in the biosynthesis of AMP from IMP. The protein is Adenylosuccinate synthetase isozyme 2 of Sus scrofa (Pig).